The primary structure comprises 467 residues: Putative alpha-amylase (467 aa).

E145 functions as the Nucleophile in the catalytic mechanism.

This sequence belongs to the glycosyl hydrolase 57 family.

It carries out the reaction Endohydrolysis of (1-&gt;4)-alpha-D-glucosidic linkages in polysaccharides containing three or more (1-&gt;4)-alpha-linked D-glucose units.. This Methanocaldococcus jannaschii (strain ATCC 43067 / DSM 2661 / JAL-1 / JCM 10045 / NBRC 100440) (Methanococcus jannaschii) protein is Putative alpha-amylase.